The sequence spans 283 residues: Probable cytochrome c oxidase subunit 3 (283 aa).

A run of 6 helical transmembrane segments spans residues 26-46, 51-71, 94-114, 179-199, 217-237, and 261-281; these read PWPVLTSFALLLLVIGGVSFM, FNIYILSAGIISVGYCLYSWW, IGMALFILTEIVFFGVFFASF, CVTALALTILLGIFFTTMQAY, FYLATGFHGAHVIIGTIFLII, and AWYWHFVDVVWLFLFTFVYIF.

The protein belongs to the cytochrome c oxidase subunit 3 family.

The protein resides in the cell membrane. It catalyses the reaction 4 Fe(II)-[cytochrome c] + O2 + 8 H(+)(in) = 4 Fe(III)-[cytochrome c] + 2 H2O + 4 H(+)(out). The chain is Probable cytochrome c oxidase subunit 3 (ctaE) from Rickettsia conorii (strain ATCC VR-613 / Malish 7).